The primary structure comprises 491 residues: CTD small phosphatase-like protein 1 (491 aa).

Disordered regions lie at residues 1–53 (MTYA…SLDY), 140–198 (KLTK…TARR), 221–249 (KIQS…TGPP), and 261–282 (TVTG…DGVT). Residues 17 to 26 (VPPPRTPVGP) are compositionally biased toward pro residues. A compositionally biased stretch (polar residues) spans 37–49 (SASQPLQPKNGAN). Positions 141–156 (LTKDEKNGGKMNRDGG) are enriched in basic and acidic residues. Polar residues predominate over residues 176–187 (ASTPLNSFSANA). Residues 223 to 237 (QSSQRTNSTNNNHQN) are compositionally biased toward low complexity. Composition is skewed to polar residues over residues 238 to 249 (GRPSTPTNTGPP) and 264 to 276 (GLPT…QQNG). One can recognise an FCP1 homology domain in the interval 307–465 (QDSNKKCLVI…LDILPSLEHL (159 aa)). The 4-aspartylphosphate intermediate role is filled by Asp-317. 3 residues coordinate Mg(2+): Asp-317, Asp-319, and Asn-428. Asp-319 functions as the Proton donor in the catalytic mechanism.

May interact (via phosphatase domain) with cpna-1. Isoform a and isoform b may interact with lim-9 (via LIM zinc-binding domain). Isoform a and isoform b may interact (via FCP1 homology domain) with unc-89 (via fibronectin type-III domain 1, Ig-like C2-type domain 48/49 and protein kinase domain 1 or Ig-like C2-type domain 50, fibronectin type-III domain 2 and protein kinase domain 2); the interaction may act as a molecular bridge to bring two unc-89 molecules together or to stabilize a loop between the 2 protein kinase domains. Requires Mg(2+) as cofactor. As to expression, expressed in pharyngeal, vulval and body wall muscles.

The protein resides in the cytoplasm. It localises to the myofibril. Its subcellular location is the sarcomere. It is found in the m line. The catalysed reaction is O-phospho-L-seryl-[protein] + H2O = L-seryl-[protein] + phosphate. The enzyme catalyses O-phospho-L-threonyl-[protein] + H2O = L-threonyl-[protein] + phosphate. Its activity is regulated as follows. Inhibited by beryllium trifluoride (BeF(3-)) and tetrafluoroaluminate (AlF(4-)) but not by sodium fluoride (NaF) or sodium orthovanadate (Na3VO4). In terms of biological role, phosphatase which may play a role in the egg laying muscles. The polypeptide is CTD small phosphatase-like protein 1 (Caenorhabditis elegans).